A 327-amino-acid chain; its full sequence is Solute-binding protein SPO1773 (327 aa).

The N-terminal stretch at 1–26 is a signal peptide; sequence MTISFKGLARGVACAALVLAALPAAA. 3-hydroxybenzoate is bound by residues 39–41, Arg150, 170–172, and Asp211; these read HTW and RIT.

The protein belongs to the bacterial solute-binding protein 7 family. As to quaternary structure, the complex is comprised of an extracytoplasmic solute-binding protein and a heteromeric permease formed by two transmembrane proteins.

The protein localises to the periplasm. Solute-binding protein that binds 3,4-dihydroxybenzoate and 3-hydroxybenzoate (in vitro). Probably part of a tripartite ATP-independent periplasmic (TRAP) transport system that mediates solute transport into the cytoplasm. The polypeptide is Solute-binding protein SPO1773 (Ruegeria pomeroyi (strain ATCC 700808 / DSM 15171 / DSS-3) (Silicibacter pomeroyi)).